Here is a 297-residue protein sequence, read N- to C-terminus: 4-hydroxy-tetrahydrodipicolinate synthase (297 aa).

T46 contributes to the pyruvate binding site. Catalysis depends on Y134, which acts as the Proton donor/acceptor. K163 functions as the Schiff-base intermediate with substrate in the catalytic mechanism. I205 contacts pyruvate.

It belongs to the DapA family. In terms of assembly, homotetramer; dimer of dimers.

It is found in the cytoplasm. It carries out the reaction L-aspartate 4-semialdehyde + pyruvate = (2S,4S)-4-hydroxy-2,3,4,5-tetrahydrodipicolinate + H2O + H(+). It participates in amino-acid biosynthesis; L-lysine biosynthesis via DAP pathway; (S)-tetrahydrodipicolinate from L-aspartate: step 3/4. Catalyzes the condensation of (S)-aspartate-beta-semialdehyde [(S)-ASA] and pyruvate to 4-hydroxy-tetrahydrodipicolinate (HTPA). The chain is 4-hydroxy-tetrahydrodipicolinate synthase from Thermoanaerobacter pseudethanolicus (strain ATCC 33223 / 39E) (Clostridium thermohydrosulfuricum).